Consider the following 279-residue polypeptide: Urease accessory protein UreD (279 aa).

This sequence belongs to the UreD family. UreD, UreF and UreG form a complex that acts as a GTP-hydrolysis-dependent molecular chaperone, activating the urease apoprotein by helping to assemble the nickel containing metallocenter of UreC. The UreE protein probably delivers the nickel.

It is found in the cytoplasm. Functionally, required for maturation of urease via the functional incorporation of the urease nickel metallocenter. The polypeptide is Urease accessory protein UreD (Brucella suis (strain ATCC 23445 / NCTC 10510)).